A 1401-amino-acid polypeptide reads, in one-letter code: Kinesin-like protein KIF27 (1401 aa).

A Kinesin motor domain is found at 5-341; it reads PVKVAVRIRP…LKYANRARNI (337 aa). Position 84–91 (84–91) interacts with ATP; sequence GQTGSGKT. 2 coiled-coil regions span residues 352–413 and 489–557; these read ESDR…GYQC and LAAD…KLNL. Residues Ser643, Ser646, Ser672, Ser675, and Ser704 each carry the phosphoserine modification. The segment at 643–662 is disordered; sequence SDNSDDEESEGQEKSGTRCR. 4 coiled-coil regions span residues 705 to 886, 916 to 1070, 1118 to 1154, and 1190 to 1219; these read QELN…IQLK, DHLQ…AAIE, NKVVNLREAERKQQLYNEEMKMKVLERDNMVRELESA, and EGIMETFKTYEDKIQQLEKDLYFYKKTSRD. At Ser999 the chain carries Phosphoserine. Residues 1259 to 1280 show a composition bias toward basic and acidic residues; it reads EELKWASRPESMKLSGREREMD. Residues 1259–1332 form a disordered region; sequence EELKWASRPE…TETDDNQFTK (74 aa). The span at 1281–1292 shows a compositional bias: polar residues; it reads SSASSLRTQPNP. 2 positions are modified to phosphoserine: Ser1367 and Ser1389.

The protein belongs to the TRAFAC class myosin-kinesin ATPase superfamily. Kinesin family. KIF27 subfamily. As to quaternary structure, interacts with STK36. As to expression, testis, pancreatic islet, germ cell tumors and Jurkat T-cells.

The protein localises to the cytoplasm. Its subcellular location is the cytoskeleton. The protein resides in the cell projection. It localises to the cilium. Its function is as follows. Plays an essential role in motile ciliogenesis. This is Kinesin-like protein KIF27 (KIF27) from Homo sapiens (Human).